We begin with the raw amino-acid sequence, 499 residues long: MKSLSHTSSNKSNGSIFTKADESEKVISRSNTASPISIENTHLTKSERDSLLFRLDLVLAPTIMILYLVAFLDRSNIGNAKVAGLPEDLKLKGDQFNIIASVFYVTFILFEMPTTLLMKKVQPKRMLAFIVISYSLTTIFTGFCHNFGGLLAARLVLGFCEAGLFPCLALYLTMIYSRVELAPRIAYLFASSALSGAFGGLFAYAVLHMDGVGGFAGWRWLFIIEGLIGFVCGVAVYFIIPNDITKAWFLSKTHQEMMRKRQLERAADLEAAHFDWKGVKSAFTDFKVYLYALSEFGQDTCLYGFSTFLPAIISGMGYTSLSVQYMTIPVYILGAATYIAASFLSDRFHHRGIILIIGNIFPIVGYILLLACQNNKSVLYFACYLCSVGVYTGAGLNVTWLSANIAPHYKRATAISLQLAIANSSGILAGQIYRYPPKYIAGHLTSLIAIFISTVLHVVNIFFLKHQNSKKQKSLASSSTIDLSEQPKDDKDARFHYIL.

A run of 12 helical transmembrane segments spans residues 51–71, 98–118, 127–147, 155–175, 187–207, 220–240, 301–321, 325–345, 352–372, 378–398, 412–432, and 444–464; these read LLFR…LVAF, IIAS…TLLM, LAFI…CHNF, LVLG…LTMI, YLFA…YAVL, WLFI…YFII, CLYG…YTSL, YMTI…SFLS, GIIL…LLAC, VLYF…GLNV, ATAI…AGQI, and LTSL…IFFL.

It belongs to the major facilitator superfamily. Allantoate permease family.

Its subcellular location is the golgi apparatus. It is found in the membrane. This is an uncharacterized protein from Schizosaccharomyces pombe (strain 972 / ATCC 24843) (Fission yeast).